The sequence spans 461 residues: Phosphomethylpyrimidine synthase (461 aa).

Residues asparagine 80, methionine 109, tyrosine 139, histidine 175, 195-197 (SRG), 236-239 (DSLR), and glutamate 275 each bind substrate. Histidine 279 lines the Zn(2+) pocket. Position 302 (tyrosine 302) interacts with substrate. Histidine 343 contributes to the Zn(2+) binding site. 3 residues coordinate [4Fe-4S] cluster: cysteine 423, cysteine 426, and cysteine 431.

It belongs to the ThiC family. It depends on [4Fe-4S] cluster as a cofactor.

The catalysed reaction is 5-amino-1-(5-phospho-beta-D-ribosyl)imidazole + S-adenosyl-L-methionine = 4-amino-2-methyl-5-(phosphooxymethyl)pyrimidine + CO + 5'-deoxyadenosine + formate + L-methionine + 3 H(+). It participates in cofactor biosynthesis; thiamine diphosphate biosynthesis. Functionally, catalyzes the synthesis of the hydroxymethylpyrimidine phosphate (HMP-P) moiety of thiamine from aminoimidazole ribotide (AIR) in a radical S-adenosyl-L-methionine (SAM)-dependent reaction. The sequence is that of Phosphomethylpyrimidine synthase from Picosynechococcus sp. (strain ATCC 27264 / PCC 7002 / PR-6) (Agmenellum quadruplicatum).